The primary structure comprises 520 residues: MMKYYDLAKFTIYQIAEMDKGLSELSPMQQALIYSFCENHDKAIEVLDGISWNRAEMTMCALLAKVQMKAKRTKEAVEVLKKALDAISHSDKGPDATAISADCLYNLGLCYMEEGNLQMTYKLAITDLTTAISMDKNSYTAFYNRALCYTKIRELQMALTDYGIVLLLDATETVKLNTFLNRGLIYVELGQYGFALEDFKQAALISRTNGSLCHATAMCHHRINEFEEAVNFFTWALKINPCFLDAYVGRGNSYMEYGHDEATKQAQKDFLKALHINPAYIKARISFGYNLQAQGKFQKAWNHFTIAIDTDPKNYLAYEGRAVVCLQMGNNFAAMQDINAAMKISTTAEFLTNRGVIHEFMGHKQNAMKDYQDAITLNPKYSLAYFNAGNIYFHHRQFSQASDYFSKALKFDPENEYVLMNRAITNTILKKYEEAKEDFANVIESCPFWAAVYFNRAHFYYCLKQYELAEEDLNKALSLKPNDALVYNFRAKVRGKIGLIEEAMADYNQALDLEDYASVI.

TPR repeat units follow at residues 57 to 90, 101 to 138, 139 to 172, 176 to 209, 210 to 243, 245 to 280, 281 to 314, 320 to 347, 348 to 381, 382 to 415, 416 to 449, 450 to 483, and 484 to 517; these read MTMC…ISHS, ADCL…DKNS, YTAF…DATE, LNTF…SRTN, GSLC…NPCF, DAYV…NPAY, IKAR…DPKN, GRAV…ISTT, AEFL…NPKY, SLAY…DPEN, EYVL…CPFW, AAVY…KPND, and ALVY…EDYA.

The polypeptide is Tetratricopeptide repeat protein 6 (Homo sapiens (Human)).